The primary structure comprises 238 residues: MLTRKQHQLLLYIDDHLRRTGYSPSFDEMKDALELRSKSGIHRLISALEERGFLRRHHHRARALEVLRLPHMGTEAPAATGTGTAFVPAVLNQGQTGLEGAFSEASVANDRQTVSIPLYGRIAAGLPIEAMQDDSDRIDVPVSLLGTGEHYALTVAGDSMIEAGILDGDIAIIRRRETAENGQIIVALIDEQEVTLKKLRRRGSMIALEAANRDYETRIFPAERVHIQGRLVALFRQY.

The segment at residues 26–46 (FDEMKDALELRSKSGIHRLIS) is a DNA-binding region (H-T-H motif). Catalysis depends on for autocatalytic cleavage activity residues S159 and K197.

It belongs to the peptidase S24 family. Homodimer.

The catalysed reaction is Hydrolysis of Ala-|-Gly bond in repressor LexA.. Functionally, represses a number of genes involved in the response to DNA damage (SOS response), including recA and lexA. In the presence of single-stranded DNA, RecA interacts with LexA causing an autocatalytic cleavage which disrupts the DNA-binding part of LexA, leading to derepression of the SOS regulon and eventually DNA repair. This Gluconobacter oxydans (strain 621H) (Gluconobacter suboxydans) protein is LexA repressor.